Here is a 421-residue protein sequence, read N- to C-terminus: Testin (421 aa).

Residues 92–199 (MILTNPVAAK…GDVKLPREMD (108 aa)) form the PET domain. Positions 134–164 (KQPVAGSEGAQYRKKQLAKQLPAHDQDPSKC) are disordered. A compositionally biased stretch (basic and acidic residues) spans 155–164 (PAHDQDPSKC). LIM zinc-binding domains are found at residues 234 to 297 (YSCY…CDSE), 299 to 359 (PRCA…NHAV), and 362 to 421 (QGCH…KMMS).

The protein belongs to the prickle / espinas / testin family. Interacts via LIM domain 1 with ZYX. Interacts (via LIM domain 3) with ENAH and VASP. Interacts with ALKBH4, talin, actin, alpha-actinin, GRIP1 and PXN. Interacts (via LIM domain 2) with ACTL7A (via N-terminus). Heterodimer with ACTL7A; the heterodimer interacts with ENAH to form a heterotrimer.

It localises to the cytoplasm. Its subcellular location is the cell junction. It is found in the focal adhesion. Its function is as follows. Scaffold protein that may play a role in cell adhesion, cell spreading and in the reorganization of the actin cytoskeleton. Plays a role in the regulation of cell proliferation. May act as a tumor suppressor. The sequence is that of Testin (TES) from Rhinolophus ferrumequinum (Greater horseshoe bat).